Consider the following 540-residue polypeptide: Probable protein kinase UbiB (540 aa).

The helical transmembrane segment at 24–44 threads the bilayer; that stretch reads LLFDQPLLPWWLASLRLLMPW. The Protein kinase domain occupies 126-494; sequence RFDVEPLASA…RRRQGDRWAL (369 aa). ATP is bound by residues 132–140 and Lys154; that span reads LASASVAQV. The active-site Proton acceptor is the Asp289. A run of 2 helical transmembrane segments spans residues 496-516 and 518-538; these read LLGA…AETA and LAAP…YLIV.

Belongs to the ABC1 family. UbiB subfamily.

Its subcellular location is the cell inner membrane. Its pathway is cofactor biosynthesis; ubiquinone biosynthesis [regulation]. Functionally, is probably a protein kinase regulator of UbiI activity which is involved in aerobic coenzyme Q (ubiquinone) biosynthesis. The chain is Probable protein kinase UbiB from Pseudomonas putida (strain ATCC 700007 / DSM 6899 / JCM 31910 / BCRC 17059 / LMG 24140 / F1).